Consider the following 62-residue polypeptide: uncharacterized protein (62 aa).

An N-terminal signal peptide occupies residues M1 to G19.

This is an uncharacterized protein from Lepidoptera (butterflies and moths).